The sequence spans 477 residues: UDP-N-acetylmuramate--L-alanine ligase (477 aa).

122–128 (GTHGKTT) is a binding site for ATP.

The protein belongs to the MurCDEF family.

It localises to the cytoplasm. The catalysed reaction is UDP-N-acetyl-alpha-D-muramate + L-alanine + ATP = UDP-N-acetyl-alpha-D-muramoyl-L-alanine + ADP + phosphate + H(+). Its pathway is cell wall biogenesis; peptidoglycan biosynthesis. Functionally, cell wall formation. This chain is UDP-N-acetylmuramate--L-alanine ligase, found in Xylella fastidiosa (strain M12).